Here is a 265-residue protein sequence, read N- to C-terminus: DNA repair protein RecO (265 aa).

The protein belongs to the RecO family.

In terms of biological role, involved in DNA repair and RecF pathway recombination. The polypeptide is DNA repair protein RecO (Mycobacterium ulcerans (strain Agy99)).